The sequence spans 347 residues: tRNA N6-adenosine threonylcarbamoyltransferase (347 aa).

Fe cation is bound by residues His-111 and His-115. Substrate contacts are provided by residues 133 to 137 (LASGG), Asp-166, Gly-179, and Asn-278. Asp-306 contributes to the Fe cation binding site.

The protein belongs to the KAE1 / TsaD family. Requires Fe(2+) as cofactor.

Its subcellular location is the cytoplasm. The enzyme catalyses L-threonylcarbamoyladenylate + adenosine(37) in tRNA = N(6)-L-threonylcarbamoyladenosine(37) in tRNA + AMP + H(+). Required for the formation of a threonylcarbamoyl group on adenosine at position 37 (t(6)A37) in tRNAs that read codons beginning with adenine. Is involved in the transfer of the threonylcarbamoyl moiety of threonylcarbamoyl-AMP (TC-AMP) to the N6 group of A37, together with TsaE and TsaB. TsaD likely plays a direct catalytic role in this reaction. The chain is tRNA N6-adenosine threonylcarbamoyltransferase from Paramagnetospirillum magneticum (strain ATCC 700264 / AMB-1) (Magnetospirillum magneticum).